A 360-amino-acid polypeptide reads, in one-letter code: Small ribosomal subunit protein mS22 (360 aa).

Ser54 is subject to Phosphoserine. Lys211 carries the post-translational modification N6-acetyllysine.

Belongs to the mitochondrion-specific ribosomal protein mS22 family. Component of the mitochondrial small ribosomal subunit (mt-SSU). Mature mammalian 55S mitochondrial ribosomes consist of a small (28S) and a large (39S) subunit. The 28S small subunit contains a 12S ribosomal RNA (12S mt-rRNA) and 30 different proteins. The 39S large subunit contains a 16S rRNA (16S mt-rRNA), a copy of mitochondrial valine transfer RNA (mt-tRNA(Val)), which plays an integral structural role, and 52 different proteins.

The protein localises to the mitochondrion. This chain is Small ribosomal subunit protein mS22 (MRPS22), found in Homo sapiens (Human).